Consider the following 54-residue polypeptide: Lectin alpha-1 chain (54 aa).

It belongs to the leguminous lectin family. Tetramer of two alpha and two beta chains.

This chain is Lectin alpha-1 chain, found in Lathyrus cicera (Flat-pod pea).